A 396-amino-acid chain; its full sequence is MQTPKSRPGSLELPQKKSPLPAPKVVRRLKPSGAESDPKTKTISKTQIPKVVADRRSARIPLNEIQKKRTGRIPELESTISQLQEELKKAKEELNRSEALKREAQEEAEDAKHQLMDINASEDSRIEELRKLSQERDKTWQSELEAMQRQHGMDSTALSSAINEVQKLKSKLFESESELEQSKYEVRSLEKLVRQLEEERVNSRDSSSSMEVEELKEAMNLSRQEITQLKSAVEAAETRYQEEYIQSTLQIRSAYEQTEAVKSRYSQREAELTEELNRTKDEIEGLRKELMEKVKEDESTGDLKKLESDLMEVRGSLMDKEMELQILRSAMEKKVETANTEAMEAELKRVKIQCEQWRKAAETAASILNNDEERTDSIETSKMLKKFGVLLKKNHK.

Disordered stretches follow at residues 1–49 (MQTP…TQIP) and 99–122 (ALKR…NASE). 2 coiled-coil regions span residues 67–124 (KKRT…SEDS) and 158–366 (LSSA…TAAS). Positions 99-115 (ALKREAQEEAEDAKHQL) are enriched in basic and acidic residues.

Belongs to the ICR family. Component of the active ARAC10-IRC5-KIN13A complex. Homooligomer. Interacts (via C-terminus) with ARAC4, ARAC10, ARAC11 and (via N-terminus) with KIN13A (via C-terminus), but no interactions with SEC3A. In terms of tissue distribution, expressed in xylem cells in the roots and in stamens, petals and pollen.

The protein localises to the cell membrane. The protein resides in the cytoplasm. It localises to the cytoskeleton. Its function is as follows. ROP effector binding specifically activated ROPs and linking them to the microtubule cytoskeleton. Involved in ROP-regulated polar growth. Involved in local disassembly of cortical microtubules when associated with ARAC10 and KIN13A and conversely also mediates the elimination of ARAC10 from the plasma membrane by the cortical microtubules. Accumulates at the plus end of shrinking microtubules. Targets KIN13A to microtubules. The polypeptide is Interactor of constitutive active ROPs 5 (ICR5) (Arabidopsis thaliana (Mouse-ear cress)).